The following is a 218-amino-acid chain: Hypoxanthine-guanine phosphoribosyltransferase (218 aa).

At Ala2 the chain carries N-acetylalanine. Residue Lys69 coordinates GMP. Residue Lys103 is modified to N6-acetyllysine. Residue Lys115 forms a Glycyl lysine isopeptide (Lys-Gly) (interchain with G-Cter in SUMO1); alternate linkage. Residue Lys115 forms a Glycyl lysine isopeptide (Lys-Gly) (interchain with G-Cter in SUMO2); alternate linkage. GMP is bound by residues 134–142 (EDIIDTGKT), Lys166, 186–188 (KFV), and Asp194. The active-site Proton acceptor is the Asp138. Position 142 is a phosphothreonine (Thr142). Asp194 provides a ligand contact to Mg(2+).

Belongs to the purine/pyrimidine phosphoribosyltransferase family. Homotetramer. The cofactor is Mg(2+).

Its subcellular location is the cytoplasm. The catalysed reaction is IMP + diphosphate = hypoxanthine + 5-phospho-alpha-D-ribose 1-diphosphate. It catalyses the reaction GMP + diphosphate = guanine + 5-phospho-alpha-D-ribose 1-diphosphate. It participates in purine metabolism; IMP biosynthesis via salvage pathway; IMP from hypoxanthine: step 1/1. Functionally, converts guanine to guanosine monophosphate, and hypoxanthine to inosine monophosphate. Transfers the 5-phosphoribosyl group from 5-phosphoribosylpyrophosphate onto the purine. Plays a central role in the generation of purine nucleotides through the purine salvage pathway. The chain is Hypoxanthine-guanine phosphoribosyltransferase (HPRT1) from Pan troglodytes (Chimpanzee).